The following is a 255-amino-acid chain: Small ribosomal subunit protein uS2 (255 aa).

Residues 232–255 (ASGRDIGASEEAPIEPALEDEAGA) are disordered.

The protein belongs to the universal ribosomal protein uS2 family.

This is Small ribosomal subunit protein uS2 from Agrobacterium fabrum (strain C58 / ATCC 33970) (Agrobacterium tumefaciens (strain C58)).